Consider the following 525-residue polypeptide: GMP synthase [glutamine-hydrolyzing] (525 aa).

The 199-residue stretch at 9–207 (RILILDFGSQ…VRDICQCEAL (199 aa)) folds into the Glutamine amidotransferase type-1 domain. The Nucleophile role is filled by C86. Catalysis depends on residues H181 and E183. The 193-residue stretch at 208-400 (WTPAKIIDDA…LGLPYDMLYR (193 aa)) folds into the GMPS ATP-PPase domain. An ATP-binding site is contributed by 235 to 241 (SGGVDSS).

Homodimer.

The catalysed reaction is XMP + L-glutamine + ATP + H2O = GMP + L-glutamate + AMP + diphosphate + 2 H(+). Its pathway is purine metabolism; GMP biosynthesis; GMP from XMP (L-Gln route): step 1/1. Catalyzes the synthesis of GMP from XMP. The sequence is that of GMP synthase [glutamine-hydrolyzing] from Escherichia coli O139:H28 (strain E24377A / ETEC).